The primary structure comprises 248 residues: MALLEICCYSMECALTAQQNGADRVELCAAPKEGGLTPSLGVLKSVRQWVTIPVHPIIRPRGGDFCYSDGEFAAILEDVRTVRELGFPGLVTGVLDVDGNVDMPRMEKIMAAAGPLAVTFHRAFDMCANPLNTLSNLAELGIARVLTSGQKSDALQGLSKIMELIAHRDAPIIMAGAGVRAENLHHFLDAGVLEVHSSAGAWQASPMRYRNQGLSMSSDAHADEYSRYVVDGAAVAEMKGIIERHQAK.

This sequence belongs to the CutC family. In terms of assembly, homodimer.

Its subcellular location is the cytoplasm. The chain is PF03932 family protein CutC from Shigella boydii serotype 4 (strain Sb227).